Reading from the N-terminus, the 287-residue chain is Elongation factor Ts (287 aa).

The interval 80 to 83 (TDFL) is involved in Mg(2+) ion dislocation from EF-Tu.

It belongs to the EF-Ts family.

It is found in the cytoplasm. Its function is as follows. Associates with the EF-Tu.GDP complex and induces the exchange of GDP to GTP. It remains bound to the aminoacyl-tRNA.EF-Tu.GTP complex up to the GTP hydrolysis stage on the ribosome. This Pseudomonas putida (strain W619) protein is Elongation factor Ts.